Reading from the N-terminus, the 95-residue chain is MRQYEVMIIVDPSQDERTVAPSLDKYLNIVREEKGSVDKVDVWGKRRFEYPIQKKEEGVYIVLDLTCESDTVRELDRVLNLNDNVLRTKVLRKDK.

The protein belongs to the bacterial ribosomal protein bS6 family.

Its function is as follows. Binds together with bS18 to 16S ribosomal RNA. In Corynebacterium urealyticum (strain ATCC 43042 / DSM 7109), this protein is Small ribosomal subunit protein bS6.